The primary structure comprises 429 residues: Glutamate-1-semialdehyde 2,1-aminomutase (429 aa).

Position 267 is an N6-(pyridoxal phosphate)lysine (Lys-267).

It belongs to the class-III pyridoxal-phosphate-dependent aminotransferase family. HemL subfamily. As to quaternary structure, homodimer. Pyridoxal 5'-phosphate serves as cofactor.

The protein localises to the cytoplasm. The enzyme catalyses (S)-4-amino-5-oxopentanoate = 5-aminolevulinate. It functions in the pathway porphyrin-containing compound metabolism; protoporphyrin-IX biosynthesis; 5-aminolevulinate from L-glutamyl-tRNA(Glu): step 2/2. This is Glutamate-1-semialdehyde 2,1-aminomutase from Xanthomonas euvesicatoria pv. vesicatoria (strain 85-10) (Xanthomonas campestris pv. vesicatoria).